We begin with the raw amino-acid sequence, 71 residues long: Large ribosomal subunit protein bL31 (71 aa).

Residues Cys-16, Cys-18, Cys-37, and Cys-40 each coordinate Zn(2+).

Belongs to the bacterial ribosomal protein bL31 family. Type A subfamily. As to quaternary structure, part of the 50S ribosomal subunit. Zn(2+) is required as a cofactor.

Binds the 23S rRNA. This chain is Large ribosomal subunit protein bL31, found in Pseudoalteromonas atlantica (strain T6c / ATCC BAA-1087).